Consider the following 706-residue polypeptide: Fatty acid oxidation complex subunit alpha (706 aa).

Positions 1 to 188 (MEKTFNLTRR…KMGLVNDVVP (188 aa)) are enoyl-CoA hydratase. Positions 308–706 (RKVKKAVILG…TMAQENAHFF (399 aa)) are 3-hydroxyacyl-CoA dehydrogenase.

This sequence in the N-terminal section; belongs to the enoyl-CoA hydratase/isomerase family. The protein in the central section; belongs to the 3-hydroxyacyl-CoA dehydrogenase family. In terms of assembly, heterotetramer of two alpha chains (FadJ) and two beta chains (FadI).

It is found in the cytoplasm. The enzyme catalyses a (3S)-3-hydroxyacyl-CoA = a (2E)-enoyl-CoA + H2O. It carries out the reaction a 4-saturated-(3S)-3-hydroxyacyl-CoA = a (3E)-enoyl-CoA + H2O. The catalysed reaction is a (3S)-3-hydroxyacyl-CoA + NAD(+) = a 3-oxoacyl-CoA + NADH + H(+). It catalyses the reaction (3S)-3-hydroxybutanoyl-CoA = (3R)-3-hydroxybutanoyl-CoA. It participates in lipid metabolism; fatty acid beta-oxidation. Its function is as follows. Catalyzes the formation of a hydroxyacyl-CoA by addition of water on enoyl-CoA. Also exhibits 3-hydroxyacyl-CoA epimerase and 3-hydroxyacyl-CoA dehydrogenase activities. The polypeptide is Fatty acid oxidation complex subunit alpha (Shewanella baltica (strain OS155 / ATCC BAA-1091)).